A 134-amino-acid chain; its full sequence is Putative oxidoreductase CatD (134 aa).

The next 4 membrane-spanning stretches (helical) occupy residues Phe-5–Leu-25, Phe-46–Leu-66, Ile-70–Ala-90, and Pro-91–Leu-111.

Belongs to the DoxX family.

The protein localises to the cell membrane. Its function is as follows. Essential for growth and viability in the presence of catechol and probably involved in the detoxification of catechol. This is Putative oxidoreductase CatD (catD) from Bacillus subtilis (strain 168).